Reading from the N-terminus, the 793-residue chain is MKNVQINIGAVVKEEDEWDQEMGPFPKPGVATLRDWDFKICNRYKIMYSPADDTCTLCTYGPCDLTGNKKGACGIDMAAACGKIVLVAVLMGTCAHTAHGRHLYHWCLDKFGDMPFDMGSEILVDAPLYRTILGKKPKSLKDFGEALEYCEEEIVQLLAACHTGQEGHYMDFESKSLHSGMIDSLGKEICDMLQTVAYDMPRGAADAPLVEIGMGTLDQNKGVLIAYGHNLAAGAEAMIYTEEHNLWDKVDIGGVCCTAIDLTRITETGRESKIPANLGPKAKVAGAMGWWRKMVRAGIMDTVIVDEQCVFCDVLEDCQQRHIPVIASNDKIMLGLPDRTNDSADAIVEDLVSFKMPGVAILDPVKAGEVAIRTAVAVKPKREQYKKESLFTEQQFKDTLATCTECNQCAFVCPPHIRISEMISEALKGNLEPFSSTYEVCVGCQRCEQTCPQEIPILKLYEYANREYIRNQKFKMRAGRGPVLDTEIRKVGAPLVLGQIPGVIALVGCSNYPNGTKECYDIAKEFVDRGYIVVATGCMAMDMSLYKDEDGKTIWEQYEGAFDGRNICNIGSCVANAHIHGAAIKVATIFAHRNERANYDDIADYIMSKVGACGVAWGAYSQKAASIATGVNRIGIPVVVQPSSVIYRRTFMGRTDKPEDWMVIDAKNGNMQQIEPAPEAMLYIAETKEEAMLEMAKLCFRPSDNTQGRGIKLTHYCDISMKYFGKLPDDWHLFVRDVKDLPLNYQTQMMKELEEKHGWKIDWKAKKFISGPLRPADVSFDPTNIPRKIRAKK.

Residues C55, C58, C63, and C73 each contribute to the [4Fe-4S] cluster site. H96 lines the CO pocket. [Ni-4Fe-4S] cluster is bound by residues H229, C257, and C309. 2 consecutive 4Fe-4S ferredoxin-type domains span residues 393 to 422 (EQQFKDTLATCTECNQCAFVCPPHIRISEM) and 432 to 461 (EPFSSTYEVCVGCQRCEQTCPQEIPILKLY). Residues C403, C406, C409, C413, C441, C444, C447, and C451 each coordinate [4Fe-4S] cluster. Residues C509, C538, and C573 each contribute to the [Ni-4Fe-4S] cluster site.

The protein belongs to the Ni-containing carbon monoxide dehydrogenase family. As to quaternary structure, heterotetramer of two alpha and two epsilon subunits. The ACDS complex is made up of alpha, epsilon, beta, gamma and delta subunits with a probable stoichiometry of (alpha(2)epsilon(2))(4)-beta(8)-(gamma(1)delta(1))(8). [4Fe-4S] cluster is required as a cofactor. The cofactor is [Ni-4Fe-4S] cluster.

It catalyses the reaction CO + 2 oxidized [2Fe-2S]-[ferredoxin] + H2O = 2 reduced [2Fe-2S]-[ferredoxin] + CO2 + 2 H(+). Its function is as follows. Part of the ACDS complex that catalyzes the reversible cleavage of acetyl-CoA, allowing autotrophic growth from CO(2). The alpha-epsilon subcomponent functions as a carbon monoxide dehydrogenase. The polypeptide is Acetyl-CoA decarbonylase/synthase complex subunit alpha (Methanothrix soehngenii (Methanosaeta concilii)).